The sequence spans 453 residues: Bifunctional protein GlmU (453 aa).

The pyrophosphorylase stretch occupies residues M1–R226. Residues L7–G10, K21, Q73, and G78–T79 contribute to the UDP-N-acetyl-alpha-D-glucosamine site. D103 lines the Mg(2+) pocket. Positions 140, 155, 170, and 224 each coordinate UDP-N-acetyl-alpha-D-glucosamine. A Mg(2+)-binding site is contributed by N224. The tract at residues K227–A247 is linker. The interval G248 to T453 is N-acetyltransferase. Residues R329 and K347 each contribute to the UDP-N-acetyl-alpha-D-glucosamine site. H359 (proton acceptor) is an active-site residue. Residues Y362 and N373 each contribute to the UDP-N-acetyl-alpha-D-glucosamine site. Acetyl-CoA contacts are provided by residues A376, N382–Y383, S401, A419, and R436.

In the N-terminal section; belongs to the N-acetylglucosamine-1-phosphate uridyltransferase family. This sequence in the C-terminal section; belongs to the transferase hexapeptide repeat family. As to quaternary structure, homotrimer. It depends on Mg(2+) as a cofactor.

Its subcellular location is the cytoplasm. It carries out the reaction alpha-D-glucosamine 1-phosphate + acetyl-CoA = N-acetyl-alpha-D-glucosamine 1-phosphate + CoA + H(+). The enzyme catalyses N-acetyl-alpha-D-glucosamine 1-phosphate + UTP + H(+) = UDP-N-acetyl-alpha-D-glucosamine + diphosphate. The protein operates within nucleotide-sugar biosynthesis; UDP-N-acetyl-alpha-D-glucosamine biosynthesis; N-acetyl-alpha-D-glucosamine 1-phosphate from alpha-D-glucosamine 6-phosphate (route II): step 2/2. It functions in the pathway nucleotide-sugar biosynthesis; UDP-N-acetyl-alpha-D-glucosamine biosynthesis; UDP-N-acetyl-alpha-D-glucosamine from N-acetyl-alpha-D-glucosamine 1-phosphate: step 1/1. It participates in bacterial outer membrane biogenesis; LPS lipid A biosynthesis. In terms of biological role, catalyzes the last two sequential reactions in the de novo biosynthetic pathway for UDP-N-acetylglucosamine (UDP-GlcNAc). The C-terminal domain catalyzes the transfer of acetyl group from acetyl coenzyme A to glucosamine-1-phosphate (GlcN-1-P) to produce N-acetylglucosamine-1-phosphate (GlcNAc-1-P), which is converted into UDP-GlcNAc by the transfer of uridine 5-monophosphate (from uridine 5-triphosphate), a reaction catalyzed by the N-terminal domain. In Cyanothece sp. (strain PCC 7425 / ATCC 29141), this protein is Bifunctional protein GlmU.